A 462-amino-acid chain; its full sequence is Annexin A7 (462 aa).

The segment at 1-130 (MSYPPNQGYP…QGYPPQQGYP (130 aa)) is disordered. Residues 7 to 131 (QGYPPQSNSP…GYPPQQGYPP (125 aa)) form a 19 X 6 AA tandem repeats of Q-G-Y-P-P-Q region. Low complexity predominate over residues 16-130 (PQPGQYGAPQ…QGYPPQQGYP (115 aa)). Annexin repeat units lie at residues 161–232 (HDCK…ALLT), 233–304 (EPAH…KLTE), 315–388 (MQVS…AIVT), and 392–462 (NPYG…DIIS).

Belongs to the annexin family.

Functionally, calcium/phospholipid-binding protein which promotes membrane fusion and is involved in exocytosis. The protein is Annexin A7 (nxnA) of Dictyostelium discoideum (Social amoeba).